A 391-amino-acid chain; its full sequence is Metallophosphoesterase 1 (391 aa).

The chain crosses the membrane as a helical span at residues 25–45 (TVVIISVLLFCEYFIYHLVIF). 6 residues coordinate a divalent metal cation: Asp72, Asp114, Asn152, His244, His298, and His300. The chain crosses the membrane as a helical span at residues 352–372 (VLATYGAAAVFLVVLILAHLE).

This sequence belongs to the metallophosphoesterase superfamily. MPPE1 family. In terms of assembly, interacts with GPI-anchor proteins (via the GPI portion). Interacts with TMED10. Mn(2+) is required as a cofactor.

The protein resides in the endoplasmic reticulum-Golgi intermediate compartment membrane. Metallophosphoesterase that catalyzes the removal of a side-chain ethanolamine-phosphate (EtNP) from the second mannose of the GPI-anchor protein intermediate. Participates in the glycan remodeling steps of GPI-anchor maturation to allow an efficient transport of GPI-anchor proteins from the endoplasmic reticulum to the Golgi. The protein is Metallophosphoesterase 1 of Cricetulus griseus (Chinese hamster).